Consider the following 368-residue polypeptide: MRSVKLFGLAALGSLGAAAPAPSRVSDLTKRSSTCTFTAASQATESASGCSEIVLDNIEVPAGETLDLSDVDDGTTIVFEGTTTFGYKEWSGPLIRFGGKDITIKQNSGAVIDGEGSRWWDGEGTNGGKTKPKFMYAHSLEDSTITGLSIKNTPVQAISVQATNLYLIDITIDNSDGDDNGGHNTDGFDISESTGVYIRGATVKNQDDCIAINSGENIEFSGGTCSGGHGLSIGSVGGRDDNTVKNVTITDSTVTDSANGVRIKTVYDATGSVSQVTYSNIKLSGITDYGIVIEQDYENGSPTGTPTTGVPITDLTIDGVTGTVESDAVEVYILCGDGSCSDWTWEGVDITGGEKSSKCENVPSGASC.

The first 18 residues, 1-18 (MRSVKLFGLAALGSLGAA), serve as a signal peptide directing secretion. A propeptide spanning residues 19-31 (APAPSRVSDLTKR) is cleaved from the precursor. A disulfide bond links Cys-35 and Cys-50. PbH1 repeat units follow at residues 140-162 (LEDSTITGLSIKNTPVQAISVQA), 167-192 (LIDITIDNSDGDDNGGHNTDGFDISE), 193-214 (STGVYIRGATVKNQDDCIAINS), 215-235 (GENIEFSGGTCSGGHGLSIGS), 244-265 (VKNVTITDSTVTDSANGVRIKT), 273-295 (VSQVTYSNIKLSGITDYGIVIEQ), and 307-352 (TTGV…DITG). Catalysis depends on Asp-207, which acts as the Proton donor. Cys-209 and Cys-225 are disulfide-bonded. The active site involves His-229. A glycan (N-linked (GlcNAc...) asparagine) is linked at Asn-246. 2 disulfide bridges follow: Cys-335–Cys-340 and Cys-359–Cys-368.

The protein belongs to the glycosyl hydrolase 28 family.

It is found in the secreted. It catalyses the reaction (1,4-alpha-D-galacturonosyl)n+m + H2O = (1,4-alpha-D-galacturonosyl)n + (1,4-alpha-D-galacturonosyl)m.. Functionally, involved in maceration and soft-rotting of plant tissue. Hydrolyzes the 1,4-alpha glycosidic bonds of de-esterified pectate in the smooth region of the plant cell wall. The protein is Probable endopolygalacturonase A (pgaA) of Aspergillus fumigatus (strain CBS 144.89 / FGSC A1163 / CEA10) (Neosartorya fumigata).